The following is a 241-amino-acid chain: Triosephosphate isomerase (241 aa).

9-11 (NWK) is a binding site for substrate. The active-site Electrophile is His-96. Glu-165 serves as the catalytic Proton acceptor. Residues Gly-171, Ser-204, and 225 to 226 (GG) contribute to the substrate site.

Belongs to the triosephosphate isomerase family. As to quaternary structure, homodimer.

The protein localises to the cytoplasm. The catalysed reaction is D-glyceraldehyde 3-phosphate = dihydroxyacetone phosphate. Its pathway is carbohydrate biosynthesis; gluconeogenesis. The protein operates within carbohydrate degradation; glycolysis; D-glyceraldehyde 3-phosphate from glycerone phosphate: step 1/1. Functionally, involved in the gluconeogenesis. Catalyzes stereospecifically the conversion of dihydroxyacetone phosphate (DHAP) to D-glyceraldehyde-3-phosphate (G3P). The sequence is that of Triosephosphate isomerase from Trichodesmium erythraeum (strain IMS101).